The primary structure comprises 239 residues: Peptidyl-tRNA hydrolase (239 aa).

A tRNA-binding site is contributed by Tyr14. His19 serves as the catalytic Proton acceptor. TRNA contacts are provided by Phe64, Asn66, and Asn112. A disordered region spans residues 188 to 225; sequence GGKPDAEEPQAPKKQVGQSHIHKARNAAQPKKLPATGP.

This sequence belongs to the PTH family. As to quaternary structure, monomer.

Its subcellular location is the cytoplasm. It catalyses the reaction an N-acyl-L-alpha-aminoacyl-tRNA + H2O = an N-acyl-L-amino acid + a tRNA + H(+). Hydrolyzes ribosome-free peptidyl-tRNAs (with 1 or more amino acids incorporated), which drop off the ribosome during protein synthesis, or as a result of ribosome stalling. In terms of biological role, catalyzes the release of premature peptidyl moieties from peptidyl-tRNA molecules trapped in stalled 50S ribosomal subunits, and thus maintains levels of free tRNAs and 50S ribosomes. In Sinorhizobium fredii (strain NBRC 101917 / NGR234), this protein is Peptidyl-tRNA hydrolase.